The sequence spans 59 residues: Large ribosomal subunit protein uL30 (59 aa).

This sequence belongs to the universal ribosomal protein uL30 family. As to quaternary structure, part of the 50S ribosomal subunit.

This Ruminiclostridium cellulolyticum (strain ATCC 35319 / DSM 5812 / JCM 6584 / H10) (Clostridium cellulolyticum) protein is Large ribosomal subunit protein uL30.